The following is an 83-amino-acid chain: Large ribosomal subunit protein bL31 (83 aa).

Belongs to the bacterial ribosomal protein bL31 family. Type A subfamily. Part of the 50S ribosomal subunit.

In terms of biological role, binds the 23S rRNA. This Synechococcus sp. (strain CC9605) protein is Large ribosomal subunit protein bL31.